A 544-amino-acid chain; its full sequence is Glycoprotein gp100 (544 aa).

Residues 1-19 form the signal peptide; it reads MKNFILLVFLFLLVSNSLG. Residues 20 to 489 are Extracellular-facing; sequence KSNKKDDQSP…SGGGGNKKLY (470 aa). N-linked (GlcNAc...) asparagine glycosylation occurs at N80. Residues 84 to 99 are compositionally biased toward polar residues; it reads EPQNNPIPTVSINPDQ. Residues 84–215 form a disordered region; the sequence is EPQNNPIPTV…TPTRPSSSVS (132 aa). Low complexity-rich tracts occupy residues 126–142, 150–165, and 189–199; these read SKPT…TIPP, PQTT…TPTP, and PKPTKSSKPTK. N-linked (GlcNAc...) asparagine glycans are attached at residues N224, N308, N332, N366, N380, N410, N422, and N478. The tract at residues 444–480 is disordered; sequence KPSTTDDDNNKNNDDGDSEIDSVGKSAVDSSKSNNNS. A helical transmembrane segment spans residues 490-510; sequence LLIILPTVLFIIVAALVAIFI. Topologically, residues 511–544 are cytoplasmic; the sequence is KTRVSQNSGSKVNKNNNKKDSINVPFQMLDEITT.

Post-translationally, N- and O-glycosylated.

It localises to the membrane. In Dictyostelium discoideum (Social amoeba), this protein is Glycoprotein gp100 (gppA).